The sequence spans 154 residues: MYKIQLLSCIALTLILVTNSAPASSSTKETQQQLEQLLLDLRLLLNGVNNPENPKLSRMLTFKFYVPKKATELTHLQCLVEELKPLEEVLYLAQSKNFHLNHIKELMSNINVTVLKLKGSETRFTCNYDDETATIVEFLNKWITFCQSIFSTLT.

Positions 1-20 (MYKIQLLSCIALTLILVTNS) are cleaved as a signal peptide. A disulfide bridge links C78 with C126. A glycan (N-linked (GlcNAc...) asparagine) is linked at N111.

Belongs to the IL-2 family.

It localises to the secreted. Its function is as follows. Cytokine produced by activated CD4-positive helper T-cells and to a lesser extend activated CD8-positive T-cells and natural killer (NK) cells that plays pivotal roles in the immune response and tolerance. Binds to a receptor complex composed of either the high-affinity trimeric IL-2R (IL2RA/CD25, IL2RB/CD122 and IL2RG/CD132) or the low-affinity dimeric IL-2R (IL2RB and IL2RG). Interaction with the receptor leads to oligomerization and conformation changes in the IL-2R subunits resulting in downstream signaling starting with phosphorylation of JAK1 and JAK3. In turn, JAK1 and JAK3 phosphorylate the receptor to form a docking site leading to the phosphorylation of several substrates including STAT5. This process leads to activation of several pathways including STAT, phosphoinositide-3-kinase/PI3K and mitogen-activated protein kinase/MAPK pathways. Functions as a T-cell growth factor and can increase NK-cell cytolytic activity as well. Promotes strong proliferation of activated B-cells and subsequently immunoglobulin production. Plays a pivotal role in regulating the adaptive immune system by controlling the survival and proliferation of regulatory T-cells, which are required for the maintenance of immune tolerance. Moreover, participates in the differentiation and homeostasis of effector T-cell subsets, including Th1, Th2, Th17 as well as memory CD8-positive T-cells. The protein is Interleukin-2 (IL2) of Felis catus (Cat).